Reading from the N-terminus, the 624-residue chain is tRNA uridine 5-carboxymethylaminomethyl modification enzyme MnmG (624 aa).

FAD is bound by residues 14 to 19, Val-126, and Ser-181; that span reads GGGHAG. 273–287 is a binding site for NAD(+); sequence GPRYCPSIEDKVVRF. Gln-370 provides a ligand contact to FAD.

It belongs to the MnmG family. As to quaternary structure, homodimer. Heterotetramer of two MnmE and two MnmG subunits. Requires FAD as cofactor.

The protein resides in the cytoplasm. NAD-binding protein involved in the addition of a carboxymethylaminomethyl (cmnm) group at the wobble position (U34) of certain tRNAs, forming tRNA-cmnm(5)s(2)U34. The protein is tRNA uridine 5-carboxymethylaminomethyl modification enzyme MnmG of Geotalea uraniireducens (strain Rf4) (Geobacter uraniireducens).